The following is a 206-amino-acid chain: Large ribosomal subunit protein uL4 (206 aa).

The interval 42-93 (KKQQGTHKTKNRSEVSRTGAKMYKQKGTGRARHHSARAPQFRGGGKAHGPVV) is disordered. A compositionally biased stretch (basic residues) spans 64–77 (YKQKGTGRARHHSA).

It belongs to the universal ribosomal protein uL4 family. In terms of assembly, part of the 50S ribosomal subunit.

Functionally, one of the primary rRNA binding proteins, this protein initially binds near the 5'-end of the 23S rRNA. It is important during the early stages of 50S assembly. It makes multiple contacts with different domains of the 23S rRNA in the assembled 50S subunit and ribosome. Its function is as follows. Forms part of the polypeptide exit tunnel. The chain is Large ribosomal subunit protein uL4 from Agrobacterium fabrum (strain C58 / ATCC 33970) (Agrobacterium tumefaciens (strain C58)).